We begin with the raw amino-acid sequence, 210 residues long: Large ribosomal subunit protein uL4 (210 aa).

In terms of assembly, part of the 50S ribosomal subunit. In terms of processing, the N-terminus is blocked.

Functionally, one of the primary rRNA binding proteins, this protein initially binds near the 5'-end of the 23S rRNA. It is important during the early stages of 50S assembly. It makes multiple contacts with different domains of the 23S rRNA in the assembled 50S subunit and ribosome. Forms part of the polypeptide exit tunnel. In terms of biological role, this protein can be incorporated into E.coli ribosomes in vivo, which resulted in decreased peptidyltransferase (Ptase) activity of the hybrid ribosomes. The hybrid 50S subunits associate less well with 30S subunits to form the ribosome. This is Large ribosomal subunit protein uL4 (rplD) from Thermus thermophilus (strain ATCC 27634 / DSM 579 / HB8).